The following is a 407-amino-acid chain: Dephospho-CoA kinase (407 aa).

A DPCK domain is found at 3–201; it reads RIGLTGGIGA…ERIVPFAHNL (199 aa). Residue 11–16 participates in ATP binding; that stretch reads GAGKSA. Residues 196–407 are UPF0157; it reads PFAHNLSTRQ…DWADSTGWKP (212 aa).

It in the N-terminal section; belongs to the CoaE family. The protein in the C-terminal section; belongs to the UPF0157 (GrpB) family.

Its subcellular location is the cytoplasm. The enzyme catalyses 3'-dephospho-CoA + ATP = ADP + CoA + H(+). The protein operates within cofactor biosynthesis; coenzyme A biosynthesis; CoA from (R)-pantothenate: step 5/5. In terms of biological role, catalyzes the phosphorylation of the 3'-hydroxyl group of dephosphocoenzyme A to form coenzyme A. The protein is Dephospho-CoA kinase of Mycolicibacterium paratuberculosis (strain ATCC BAA-968 / K-10) (Mycobacterium paratuberculosis).